A 388-amino-acid polypeptide reads, in one-letter code: Diphosphomevalonate decarboxylase (388 aa).

(R)-5-diphosphomevalonate-binding positions include 19–22 (YWGK), arginine 74, 153–158 (SGSACR), and threonine 209. Residues 367 to 388 (QGPQGSSESLINDKGLPKAVAN) form a disordered region.

It belongs to the diphosphomevalonate decarboxylase family. As to quaternary structure, homodimer.

It catalyses the reaction (R)-5-diphosphomevalonate + ATP = isopentenyl diphosphate + ADP + phosphate + CO2. The protein operates within isoprenoid biosynthesis; isopentenyl diphosphate biosynthesis via mevalonate pathway; isopentenyl diphosphate from (R)-mevalonate: step 3/3. Its function is as follows. Diphosphomevalonate decarboxylase; part of the second module of ergosterol biosynthesis pathway that includes the middle steps of the pathway. The second module is carried out in the vacuole and involves the formation of farnesyl diphosphate, which is also an important intermediate in the biosynthesis of ubiquinone, dolichol, heme and prenylated proteins. Activity by the mevalonate kinase ERG12 first converts mevalonate into 5-phosphomevalonate. 5-phosphomevalonate is then further converted to 5-diphosphomevalonate by the phosphomevalonate kinase ERG8. The diphosphomevalonate decarboxylase MVD1/ERG19 then produces isopentenyl diphosphate. The isopentenyl-diphosphate delta-isomerase IDI1 then catalyzes the 1,3-allylic rearrangement of the homoallylic substrate isopentenyl (IPP) to its highly electrophilic allylic isomer, dimethylallyl diphosphate (DMAPP). Finally the farnesyl diphosphate synthase ERG20 catalyzes the sequential condensation of isopentenyl pyrophosphate with dimethylallyl pyrophosphate, and then with the resultant geranylpyrophosphate to the ultimate product farnesyl pyrophosphate. The polypeptide is Diphosphomevalonate decarboxylase (Debaryomyces hansenii (strain ATCC 36239 / CBS 767 / BCRC 21394 / JCM 1990 / NBRC 0083 / IGC 2968) (Yeast)).